A 178-amino-acid chain; its full sequence is Caveolin-1 (178 aa).

Ser-2 carries the N-acetylserine modification. At Ser-2 the chain carries Phosphoserine. Residues 2 to 94 are required for homooligomerization; that stretch reads SGGKYVDSEG…WKASFTTFTV (93 aa). Residues 2–104 are Cytoplasmic-facing; sequence SGGKYVDSEG…TKYWFYRLLS (103 aa). Position 5 is an N6-acetyllysine; alternate (Lys-5). Residue Lys-5 forms a Glycyl lysine isopeptide (Lys-Gly) (interchain with G-Cter in ubiquitin); alternate linkage. Tyr-6 carries the post-translational modification Phosphotyrosine. Ser-9 is subject to Phosphoserine. At Tyr-14 the chain carries Phosphotyrosine; by ABL1. Tyr-25 bears the Phosphotyrosine mark. Glycyl lysine isopeptide (Lys-Gly) (interchain with G-Cter in ubiquitin) cross-links involve residues Lys-26, Lys-30, Lys-39, Lys-47, and Lys-57. The segment at 82 to 94 is interaction with CAVIN3; it reads DGIWKASFTTFTV. The segment at residues 105 to 125 is an intramembrane region (helical); that stretch reads GIFGIPMALIWGVYFAILSFL. The Cytoplasmic portion of the chain corresponds to 126–178; sequence HIWAVVPCIKSFLIEIQCISRVYSIYVHTFCDPLFEAIGKIFSNIRISTQKEI. Residues 131–142 form an interacts with SPRY1, SPRY2, SPRY3 and SPRY4 region; it reads VPCIKSFLIEIQ. S-palmitoyl cysteine attachment occurs at residues Cys-133, Cys-143, and Cys-156. Positions 149 to 160 are interacts with SPRY1, SPRY2, and SPRY4; sequence SIYVHTFCDPLF. The interacts with SPRY1, SPRY2, SPRY3 and SPRY4 stretch occupies residues 167 to 178; sequence FSNIRISTQKEI.

This sequence belongs to the caveolin family. In terms of assembly, homooligomer. Interacts with GLIPR2. Interacts with NOSTRIN. Interacts with SNAP25 and STX1A. Interacts (via the N-terminus) with DPP4; the interaction is direct. Interacts with CTNNB1, CDH1 and JUP. Interacts with PACSIN2; this interaction induces membrane tubulation. Interacts with SLC7A9. Interacts with BMX and BTK. Interacts with TGFBR1. Interacts with CAVIN3 (via leucine-zipper domain) in a cholesterol-sensitive manner. Interacts with CAVIN1. Interacts with EHD2 in a cholesterol-dependent manner. Forms a ternary complex with UBXN6 and VCP; mediates CAV1 targeting to lysosomes for degradation. Interacts with ABCG1; this interaction regulates ABCG1-mediated cholesterol efflux. Interacts with NEU3; this interaction enhances NEU3 sialidase activity within caveola. Interacts (via C-terminus) with SPRY1, SPRY2 (via C-terminus), SPRY3, and SPRY4. Interacts with IGFBP5; this interaction allows trafficking of IGFBP5 from the plasma membrane to the nucleus. Post-translationally, phosphorylated at Tyr-14 by ABL1 in response to oxidative stress. Ubiquitinated. Undergo monoubiquitination and multi- and/or polyubiquitination. Monoubiquitination of N-terminal lysines promotes integration in a ternary complex with UBXN6 and VCP which promotes oligomeric CAV1 targeting to lysosomes for degradation. Ubiquitinated by ZNRF1; leading to degradation and modulation of the TLR4-mediated immune response.

The protein resides in the golgi apparatus membrane. The protein localises to the cell membrane. Its subcellular location is the membrane. It localises to the caveola. It is found in the membrane raft. May act as a scaffolding protein within caveolar membranes. Forms a stable heterooligomeric complex with CAV2 that targets to lipid rafts and drives caveolae formation. Mediates the recruitment of CAVIN proteins (CAVIN1/2/3/4) to the caveolae. Interacts directly with G-protein alpha subunits and can functionally regulate their activity. Involved in the costimulatory signal essential for T-cell receptor (TCR)-mediated T-cell activation. Its binding to DPP4 induces T-cell proliferation and NF-kappa-B activation in a T-cell receptor/CD3-dependent manner. Recruits CTNNB1 to caveolar membranes and may regulate CTNNB1-mediated signaling through the Wnt pathway. Negatively regulates TGFB1-mediated activation of SMAD2/3 by mediating the internalization of TGFBR1 from membrane rafts leading to its subsequent degradation. Binds 20(S)-hydroxycholesterol (20(S)-OHC). This chain is Caveolin-1 (CAV1), found in Echinops telfairi (Lesser hedgehog tenrec).